The chain runs to 142 residues: Large ribosomal subunit protein uL11 (142 aa).

This sequence belongs to the universal ribosomal protein uL11 family. As to quaternary structure, part of the ribosomal stalk of the 50S ribosomal subunit. Interacts with L10 and the large rRNA to form the base of the stalk. L10 forms an elongated spine to which L12 dimers bind in a sequential fashion forming a multimeric L10(L12)X complex. Post-translationally, one or more lysine residues are methylated.

Its function is as follows. Forms part of the ribosomal stalk which helps the ribosome interact with GTP-bound translation factors. The polypeptide is Large ribosomal subunit protein uL11 (Mycoplasma mycoides subsp. mycoides SC (strain CCUG 32753 / NCTC 10114 / PG1)).